We begin with the raw amino-acid sequence, 461 residues long: Decaprenylphosphoryl-beta-D-ribose oxidase (461 aa).

Positions 19–194 (TAPSVANVLR…MRATIEMTPT (176 aa)) constitute an FAD-binding PCMH-type domain. Residues 53-63 (ARGLGRSYGDN), Gly-117, 122-125 (TVGG), 129-132 (CDIH), Ile-184, and Tyr-415 each bind FAD.

The protein belongs to the DprE1 family. As to quaternary structure, monomer. Although forming apparent dimer in crystals, DprE1 does not dimerize appreciably in solution. Interacts with DprE2 to form an epimerase complex.

It localises to the periplasm. It catalyses the reaction trans,octa-cis-decaprenylphospho-beta-D-ribofuranose + FAD + H(+) = trans,octa-cis-decaprenylphospho-beta-D-erythro-pentofuranosid-2-ulose + FADH2. It participates in cell wall biogenesis; cell wall polysaccharide biosynthesis. Its activity is regulated as follows. Is inhibited by 8-nitro-benzothiazinones (BTZs) such as BTZ043 and PBTZ169; BTZs are a new class of antimycobacterial agents that kill M.tuberculosis in vitro, ex vivo, and in mouse models of tuberculosis. Is also inhibited by dinitrobenzamide derivatives (DNBs), which thus block formation of both cell-wall lipoarabinomannan and arabinogalactan via inhibition of decaprenyl-phospho-arabinose (DPA) synthesis; DNBs show high activity against intracellular growth of M.tuberculosis inside macrophages, including extensively drug resistant (XDR) strains. BTZs and DNBs are suicide inhibitors that act via covalent modification of DprE1; the essential nitro group of these compounds is reduced by DprE1 to a nitroso group, which then specifically reacts with Cys-387 of DprE1 to form an irreversible semimercaptal adduct. Many other compounds with diverse scaffolds were found to act as either covalent (e.g. nitroquinoxalines, nitroimidazoles) or non-covalent (e.g. the benzothiazole derivative TCA1, the 2-carboxyquinoxaline Ty38C, 8-pyrrole-benzothiazinones, 1,4-azaindoles, pyrazolopyridones, 4-aminoquinolone piperidine amides) DprE1 inhibitors. Its function is as follows. Component of the DprE1-DprE2 complex that catalyzes the 2-step epimerization of decaprenyl-phospho-ribose (DPR) to decaprenyl-phospho-arabinose (DPA), a key precursor that serves as the arabinose donor required for the synthesis of cell-wall arabinans. DprE1 catalyzes the first step of epimerization, namely FAD-dependent oxidation of the C2' hydroxyl of DPR to yield the keto intermediate decaprenyl-phospho-2'-keto-D-arabinose (DPX). The intermediate DPX is then transferred to DprE2 subunit of the epimerase complex, most probably through a 'substrate channel' at the interface of DprE1-DprE2 complex. Can also use farnesyl-phosphoryl-beta-D-ribofuranose (FPR) as substrate in vitro. Functionally, dprE1 is a highly vulnerable and fully validated tuberculosis drug target. In Mycobacterium tuberculosis (strain CDC 1551 / Oshkosh), this protein is Decaprenylphosphoryl-beta-D-ribose oxidase.